We begin with the raw amino-acid sequence, 210 residues long: Na(+)-translocating NADH-quinone reductase subunit D (210 aa).

A run of 6 helical transmembrane segments spans residues 42–62, 66–86, 103–123, 131–151, 154–174, and 178–198; these read VVMT…ISTI, IPNS…VIVV, VYVG…AFAM, FMDG…VGAF, LFGS…NGGW, and NGLL…IWAV.

The protein belongs to the NqrDE/RnfAE family. As to quaternary structure, composed of six subunits; NqrA, NqrB, NqrC, NqrD, NqrE and NqrF.

The protein localises to the cell inner membrane. The enzyme catalyses a ubiquinone + n Na(+)(in) + NADH + H(+) = a ubiquinol + n Na(+)(out) + NAD(+). NQR complex catalyzes the reduction of ubiquinone-1 to ubiquinol by two successive reactions, coupled with the transport of Na(+) ions from the cytoplasm to the periplasm. NqrA to NqrE are probably involved in the second step, the conversion of ubisemiquinone to ubiquinol. The sequence is that of Na(+)-translocating NADH-quinone reductase subunit D from Psychromonas ingrahamii (strain DSM 17664 / CCUG 51855 / 37).